The primary structure comprises 494 residues: Cytochrome P450 2A4 (494 aa).

The residue at position 131 (S131) is a Phosphoserine. An N6-acetyllysine modification is found at K379. C439 is a heme binding site.

It belongs to the cytochrome P450 family. Requires heme as cofactor. In terms of tissue distribution, kidney and lung. Expressed in liver, with a strong circadian rhythmicity. Circadian expression is regulated by DBP.

The protein localises to the endoplasmic reticulum membrane. The protein resides in the microsome membrane. It carries out the reaction an organic molecule + reduced [NADPH--hemoprotein reductase] + O2 = an alcohol + oxidized [NADPH--hemoprotein reductase] + H2O + H(+). Its function is as follows. Highly active in the 15-alpha-hydroxylation of testosterone. Also active in the 15-alpha-hydroxylation of progesterone and androstenedione. Little or no activity on corticosterone, pregnenolone, dehydroepiandrosterone, estradiol or estriol. The sequence is that of Cytochrome P450 2A4 (Cyp2a4) from Mus musculus (Mouse).